The sequence spans 506 residues: Glutamate--tRNA ligase (506 aa).

The 'HIGH' region motif lies at 21–31 (PSPTGIPHVGM). A 'KMSKS' region motif is present at residues 265–269 (KLSKR). K268 provides a ligand contact to ATP.

It belongs to the class-I aminoacyl-tRNA synthetase family. Glutamate--tRNA ligase type 1 subfamily. In terms of assembly, monomer.

The protein resides in the cytoplasm. The enzyme catalyses tRNA(Glu) + L-glutamate + ATP = L-glutamyl-tRNA(Glu) + AMP + diphosphate. In terms of biological role, catalyzes the attachment of glutamate to tRNA(Glu) in a two-step reaction: glutamate is first activated by ATP to form Glu-AMP and then transferred to the acceptor end of tRNA(Glu). In Bifidobacterium adolescentis (strain ATCC 15703 / DSM 20083 / NCTC 11814 / E194a), this protein is Glutamate--tRNA ligase.